A 287-amino-acid chain; its full sequence is Nucleoside kinase (287 aa).

Asp-13, Asn-28, Gly-38, and Asn-42 together coordinate substrate. Gln-102 contacts ATP. Substrate is bound by residues Ser-104 and Gln-150. Residues Asn-173 and 196 to 201 each bind ATP; that span reads TNGERG. Substrate is bound at residue Asp-227. Asp-227 serves as the catalytic Proton acceptor.

The protein belongs to the carbohydrate kinase PfkB family. In terms of assembly, homodimer. It depends on Mg(2+) as a cofactor. Requires Co(2+) as cofactor.

It carries out the reaction adenosine + ATP = AMP + ADP + H(+). The catalysed reaction is cytidine + ATP = CMP + ADP + H(+). It catalyses the reaction guanosine + ATP = GMP + ADP + H(+). The enzyme catalyses inosine + ATP = IMP + ADP + H(+). In terms of biological role, nucleoside kinase with broad substrate specificity. Catalyzes the phosphorylation of a variety of nucleosides to the corresponding nucleoside 5'-mono-phosphate in the presence of phosphate donors and divalent cations. Displays the most efficient activity with guanosine, followed by inosine, cytidine, and adenosine. Negligible enzymatic activity is detected with thymidine, uridine, and 2-deoxyadenosine. ATP is the most efficient phosphate donor, but can also use GTP and ITP. Shows no sugar kinase activity, since it is unable to phosphorylate ribose, fructose-1-phosphate, or fructose-6-phosphate. The sequence is that of Nucleoside kinase from Thermoplasma acidophilum (strain ATCC 25905 / DSM 1728 / JCM 9062 / NBRC 15155 / AMRC-C165).